Here is a 135-residue protein sequence, read N- to C-terminus: Fatty acid-binding protein 5 (135 aa).

Residue Ala2 is modified to N-acetylalanine. Phosphoserine is present on Ser3. Residues 24 to 34 (KELGVGLALRK) carry the Nuclear localization signal motif. Positions 43 and 109 each coordinate N-eicosanoyl ethanolamine. Residues Cys120 and Cys127 are joined by a disulfide bond. 129-131 (RVY) contacts (9Z,12Z)-octadecadienoate. Tyr131 is a binding site for N-eicosanoyl ethanolamine. Tyr131 provides a ligand contact to hexadecanoate. Position 131 is a phosphotyrosine (Tyr131).

This sequence belongs to the calycin superfamily. Fatty-acid binding protein (FABP) family. In terms of assembly, monomer.

It is found in the cytoplasm. The protein resides in the nucleus. It localises to the synapse. Its subcellular location is the postsynaptic density. The protein localises to the secreted. The enzyme catalyses hexadecanoate(out) = hexadecanoate(in). It carries out the reaction (9Z,12Z)-octadecadienoate(out) = (9Z,12Z)-octadecadienoate(in). The catalysed reaction is (9Z)-octadecenoate(out) = (9Z)-octadecenoate(in). In terms of biological role, intracellular carrier for long-chain fatty acids and related active lipids, such as endocannabinoids, that regulate the metabolism and actions of the ligands they bind. In addition to the cytosolic transport, selectively delivers specific fatty acids from the cytosol to the nucleus, wherein they activate nuclear receptors. Delivers retinoic acid to the nuclear receptor peroxisome proliferator-activated receptor delta; which promotes proliferation and survival. May also serve as a synaptic carrier of endocannabinoid at central synapses and thus controls retrograde endocannabinoid signaling. Modulates inflammation by regulating PTGES induction via NF-kappa-B activation, and prostaglandin E2 (PGE2) biosynthesis during inflammation. This chain is Fatty acid-binding protein 5, found in Rattus norvegicus (Rat).